The primary structure comprises 434 residues: Probable proline transporter 2 (434 aa).

The next 11 membrane-spanning stretches (helical) occupy residues 26–46 (PWYQ…VLGY), 49–69 (SVMV…AAAI), 106–126 (LTWA…IILA), 149–169 (IALS…LSAL), 171–191 (IWLG…FVLS), 213–233 (IFTT…GMLP), 251–271 (LWFQ…MGYW), 297–317 (LSAF…MYEF), 339–359 (VGVR…LPFL), 362–382 (FMSL…ANHM), and 403–423 (VAGF…LIMV).

It belongs to the amino acid/polyamine transporter 2 family. Amino acid/auxin permease (AAAP) (TC 2.A.18.3) subfamily.

Its subcellular location is the cell membrane. Proline transporter that mediates proline transport across the plasma membrane. This chain is Probable proline transporter 2, found in Oryza sativa subsp. japonica (Rice).